Reading from the N-terminus, the 395-residue chain is Acetate kinase 1 (395 aa).

A Mg(2+)-binding site is contributed by Asn-8. Position 15 (Lys-15) interacts with ATP. Arg-89 lines the substrate pocket. The active-site Proton donor/acceptor is the Asp-146. Residues 206 to 210 (HIGNG), 283 to 285 (DMR), and 330 to 334 (GIGEN) each bind ATP. Residue Glu-382 participates in Mg(2+) binding.

This sequence belongs to the acetokinase family. Homodimer. Mg(2+) is required as a cofactor. It depends on Mn(2+) as a cofactor.

The protein resides in the cytoplasm. The enzyme catalyses acetate + ATP = acetyl phosphate + ADP. It functions in the pathway metabolic intermediate biosynthesis; acetyl-CoA biosynthesis; acetyl-CoA from acetate: step 1/2. In terms of biological role, catalyzes the formation of acetyl phosphate from acetate and ATP. Can also catalyze the reverse reaction. This is Acetate kinase 1 from Lactococcus lactis subsp. lactis (strain IL1403) (Streptococcus lactis).